We begin with the raw amino-acid sequence, 303 residues long: Recombination-associated protein RdgC (303 aa).

This sequence belongs to the RdgC family.

The protein localises to the cytoplasm. It localises to the nucleoid. Functionally, may be involved in recombination. The protein is Recombination-associated protein RdgC of Yersinia pseudotuberculosis serotype O:1b (strain IP 31758).